Here is an 89-residue protein sequence, read N- to C-terminus: Small ribosomal subunit protein uS15 (89 aa).

Belongs to the universal ribosomal protein uS15 family. As to quaternary structure, part of the 30S ribosomal subunit. Forms a bridge to the 50S subunit in the 70S ribosome, contacting the 23S rRNA.

One of the primary rRNA binding proteins, it binds directly to 16S rRNA where it helps nucleate assembly of the platform of the 30S subunit by binding and bridging several RNA helices of the 16S rRNA. Its function is as follows. Forms an intersubunit bridge (bridge B4) with the 23S rRNA of the 50S subunit in the ribosome. This chain is Small ribosomal subunit protein uS15, found in Pseudomonas savastanoi pv. phaseolicola (strain 1448A / Race 6) (Pseudomonas syringae pv. phaseolicola (strain 1448A / Race 6)).